The sequence spans 435 residues: Virulence factor PIT1 (435 aa).

5 helical membrane passes run 33–53 (ETTT…SEVI), 77–97 (IFFI…ILVT), 111–131 (WAWT…CVIG), 143–163 (VASW…MWTN), and 204–224 (TFWF…ACCI). A glycan (N-linked (GlcNAc...) asparagine) is linked at Asn330. Positions 392–404 (SPQMPSKAQSQSI) are enriched in polar residues. The interval 392–435 (SPQMPSKAQSQSIPYKREVEVTVDMSPVPPPPGPSPAPLPAPYM) is disordered. Positions 418-435 (PVPPPPGPSPAPLPAPYM) are enriched in pro residues.

O-mannosylated by PMT4. Is also N-glycosylated.

It is found in the cell membrane. Plasma membrane virulence factor required for spreading and inducing tumors in infected leaves. The polypeptide is Virulence factor PIT1 (Mycosarcoma maydis (Corn smut fungus)).